The sequence spans 152 residues: Cytochrome c-type biogenesis protein CcmE (152 aa).

At Met1–Arg8 the chain is on the cytoplasmic side. A helical; Signal-anchor for type II membrane protein transmembrane segment spans residues Leu9–Ala29. Topologically, residues Leu30–Pro152 are periplasmic. Heme contacts are provided by His130 and Tyr134. A disordered region spans residues Asn133–Pro152.

The protein belongs to the CcmE/CycJ family.

It localises to the cell inner membrane. Its function is as follows. Heme chaperone required for the biogenesis of c-type cytochromes. Transiently binds heme delivered by CcmC and transfers the heme to apo-cytochromes in a process facilitated by CcmF and CcmH. The polypeptide is Cytochrome c-type biogenesis protein CcmE (Klebsiella pneumoniae (strain 342)).